Here is a 293-residue protein sequence, read N- to C-terminus: Ribosomal protein L11 methyltransferase (293 aa).

Residues Thr145, Gly166, Asp188, and Asn230 each contribute to the S-adenosyl-L-methionine site.

The protein belongs to the methyltransferase superfamily. PrmA family.

It is found in the cytoplasm. The catalysed reaction is L-lysyl-[protein] + 3 S-adenosyl-L-methionine = N(6),N(6),N(6)-trimethyl-L-lysyl-[protein] + 3 S-adenosyl-L-homocysteine + 3 H(+). Functionally, methylates ribosomal protein L11. This is Ribosomal protein L11 methyltransferase from Yersinia pseudotuberculosis serotype O:3 (strain YPIII).